The following is a 216-amino-acid chain: MNVKNQIILALDVEEKNKAYEILDQTTEYLDTIKIGYPITLALGPSIITSIKEEYDVKIIADFKVADIDATNEKIVKTTLNYGADAIIVHGFTGEDSVLACKNMAEKLDKEIFLLTEMSHPGADKFLKPVSLDIAQMGVDLGIKNYVAPATKIDRLKKIREVVGKDSFIISPGVGFQGGNAKDTLQYSNAAIVGRSIYNASNPKKALEEIIESIKV.

Residues aspartate 12, lysine 34, 62–71 (DFKVADIDAT), serine 119, 172–182 (PGVGFQGGNAK), glycine 194, and arginine 195 contribute to the substrate site. The active-site Proton donor is the lysine 64.

This sequence belongs to the OMP decarboxylase family. Type 1 subfamily. In terms of assembly, homodimer.

It catalyses the reaction orotidine 5'-phosphate + H(+) = UMP + CO2. It functions in the pathway pyrimidine metabolism; UMP biosynthesis via de novo pathway; UMP from orotate: step 2/2. In terms of biological role, catalyzes the decarboxylation of orotidine 5'-monophosphate (OMP) to uridine 5'-monophosphate (UMP). This is Orotidine 5'-phosphate decarboxylase from Methanosphaera stadtmanae (strain ATCC 43021 / DSM 3091 / JCM 11832 / MCB-3).